The chain runs to 236 residues: MATPHINAVEGAFAETMLFPGDPLRAKYIAETFLENVEQVTDVRNMLGFTGTYKGKRISVMGSGMGIPSCSIYATELIRDYGVKNLIRVGTCGAISTDVKVRDVIIGMGACTDSAVNRLRFKGQDFAAIANYELMNAVIESAKVRGTKVRVGNIFSADLFYTPDPQMFDVMEKMGVLGVEMEAAGLYGVAHEFGARALCVVTVSDHIRTGEKTSAEERQTTFNDMIIMTLEAAITL.

His-5 serves as a coordination point for a purine D-ribonucleoside. Residues Gly-21, Arg-25, Arg-44, and 88 to 91 contribute to the phosphate site; that span reads RVGT. Residues 180-182 and 204-205 contribute to the a purine D-ribonucleoside site; these read EME and SD. The active-site Proton donor is the Asp-205.

Belongs to the PNP/UDP phosphorylase family. As to quaternary structure, homohexamer; trimer of homodimers.

The catalysed reaction is a purine D-ribonucleoside + phosphate = a purine nucleobase + alpha-D-ribose 1-phosphate. It carries out the reaction a purine 2'-deoxy-D-ribonucleoside + phosphate = a purine nucleobase + 2-deoxy-alpha-D-ribose 1-phosphate. Functionally, catalyzes the reversible phosphorolytic breakdown of the N-glycosidic bond in the beta-(deoxy)ribonucleoside molecules, with the formation of the corresponding free purine bases and pentose-1-phosphate. This chain is Purine nucleoside phosphorylase DeoD-type, found in Shewanella baltica (strain OS155 / ATCC BAA-1091).